The primary structure comprises 367 residues: Alginate lyase (367 aa).

The first 24 residues, 1–24, serve as a signal peptide directing secretion; the sequence is MTIFKRISSPALLALALFGGAAHA. Substrate contacts are provided by residues 63 to 64, 136 to 137, and Tyr-254; these read SK and HT.

It belongs to the polysaccharide lyase 5 family.

The protein localises to the periplasm. It carries out the reaction Eliminative cleavage of alginate to give oligosaccharides with 4-deoxy-alpha-L-erythro-hex-4-enuronosyl groups at their non-reducing ends and beta-D-mannuronate at their reducing end.. In terms of biological role, catalyzes the depolymerization of alginate by cleaving the beta-1,4 glycosidic bond between two adjacent sugar residues via a beta-elimination mechanism. May serve to degrade mislocalized alginate that is trapped in the periplasmic space. The protein is Alginate lyase of Pseudomonas putida (strain ATCC 700007 / DSM 6899 / JCM 31910 / BCRC 17059 / LMG 24140 / F1).